Here is a 125-residue protein sequence, read N- to C-terminus: Prefoldin subunit beta (125 aa).

The protein belongs to the prefoldin subunit beta family. In terms of assembly, heterohexamer of two alpha and four beta subunits.

It localises to the cytoplasm. Its function is as follows. Molecular chaperone capable of stabilizing a range of proteins. Seems to fulfill an ATP-independent, HSP70-like function in archaeal de novo protein folding. The chain is Prefoldin subunit beta from Pyrobaculum calidifontis (strain DSM 21063 / JCM 11548 / VA1).